We begin with the raw amino-acid sequence, 288 residues long: Cell division protein DivIB (288 aa).

The Cytoplasmic portion of the chain corresponds to 1 to 25 (MEKVIDITERVPAMKKRRRRRTNFK). A helical membrane pass occupies residues 26–46 (FLALVTIFLFIIIILLYFQLP). Over 47–288 (YSDIKKIDIK…LEEQNEEEPE (242 aa)) the chain is Extracellular. The region spanning 48–116 (SDIKKIDIKG…NEVQITVEEW (69 aa)) is the POTRA domain. Residues 253-263 (LIKENTEKTEE) are compositionally biased toward basic and acidic residues. Residues 253 to 288 (LIKENTEKTEEPAEETENADTEEGGQLEEQNEEEPE) are disordered. Acidic residues predominate over residues 264–288 (PAEETENADTEEGGQLEEQNEEEPE).

The protein belongs to the FtsQ/DivIB family. DivIB subfamily.

The protein localises to the cell membrane. Cell division protein that may be involved in stabilizing or promoting the assembly of the division complex. The polypeptide is Cell division protein DivIB (Solibacillus silvestris (strain StLB046) (Bacillus silvestris)).